Reading from the N-terminus, the 688-residue chain is Glycine--tRNA ligase beta subunit (688 aa).

It belongs to the class-II aminoacyl-tRNA synthetase family. Tetramer of two alpha and two beta subunits.

The protein localises to the cytoplasm. It catalyses the reaction tRNA(Gly) + glycine + ATP = glycyl-tRNA(Gly) + AMP + diphosphate. This chain is Glycine--tRNA ligase beta subunit, found in Listeria monocytogenes serovar 1/2a (strain ATCC BAA-679 / EGD-e).